A 255-amino-acid chain; its full sequence is 5-oxoprolinase subunit A (255 aa).

Belongs to the LamB/PxpA family. As to quaternary structure, forms a complex composed of PxpA, PxpB and PxpC.

It catalyses the reaction 5-oxo-L-proline + ATP + 2 H2O = L-glutamate + ADP + phosphate + H(+). In terms of biological role, catalyzes the cleavage of 5-oxoproline to form L-glutamate coupled to the hydrolysis of ATP to ADP and inorganic phosphate. This chain is 5-oxoprolinase subunit A, found in Campylobacter jejuni subsp. jejuni serotype O:6 (strain 81116 / NCTC 11828).